A 933-amino-acid chain; its full sequence is DNA repair-scaffolding protein (933 aa).

3 disordered regions span residues 1-34 (MSGA…LRRG), 67-174 (SEKT…KGTL), and 205-224 (YSSD…IDSE). Basic and acidic residues-rich tracts occupy residues 16–29 (WHIE…ERSQ), 71–87 (GITE…KTET), and 119–132 (RDGR…RLGD). A compositionally biased stretch (acidic residues) spans 138 to 148 (PEDEDIEDELQ). The tract at residues 175 to 469 (DISDCDSCAS…GTGWTHGHEK (295 aa)) is necessary for interaction with RAD51. Positions 214 to 224 (DPEHSLFIDSE) are enriched in basic and acidic residues.

As to quaternary structure, found in a complex, at least composed of BLM, RAD51 and SPIDR; the complex formation is mediated by SPIDR. Interacts (via C-terminal region) with BLM; the interaction is direct. Interacts with RAD51; the interaction is direct. Interacts (via the C-terminal region) with FIGNL1 (via N-terminal one-half region); the interaction is direct.

The protein resides in the nucleus. Functionally, plays a role in DNA double-strand break (DBS) repair via homologous recombination (HR). Serves as a scaffolding protein that helps to promote the recruitment of DNA-processing enzymes like the helicase BLM and recombinase RAD51 to site of DNA damage, and hence contributes to maintain genomic integrity. The polypeptide is DNA repair-scaffolding protein (Spidr) (Mus musculus (Mouse)).